The primary structure comprises 339 residues: Coproporphyrin III ferrochelatase (339 aa).

S52 and Y121 together coordinate Fe-coproporphyrin III. Residues H181 and E264 each contribute to the Fe(2+) site.

This sequence belongs to the ferrochelatase family.

Its subcellular location is the cytoplasm. It carries out the reaction Fe-coproporphyrin III + 2 H(+) = coproporphyrin III + Fe(2+). Its pathway is porphyrin-containing compound metabolism; protoheme biosynthesis. Functionally, involved in coproporphyrin-dependent heme b biosynthesis. Catalyzes the insertion of ferrous iron into coproporphyrin III to form Fe-coproporphyrin III. The sequence is that of Coproporphyrin III ferrochelatase from Mycolicibacterium vanbaalenii (strain DSM 7251 / JCM 13017 / BCRC 16820 / KCTC 9966 / NRRL B-24157 / PYR-1) (Mycobacterium vanbaalenii).